A 359-amino-acid polypeptide reads, in one-letter code: Protein RecA (359 aa).

ATP is bound at residue 74-81 (GPESSGKT).

It belongs to the RecA family.

The protein localises to the cytoplasm. Functionally, can catalyze the hydrolysis of ATP in the presence of single-stranded DNA, the ATP-dependent uptake of single-stranded DNA by duplex DNA, and the ATP-dependent hybridization of homologous single-stranded DNAs. It interacts with LexA causing its activation and leading to its autocatalytic cleavage. The chain is Protein RecA from Anaplasma marginale (strain Florida).